Consider the following 274-residue polypeptide: Tropomyosin (274 aa).

Residues Met1 to Asn35 are compositionally biased toward basic and acidic residues. The segment at Met1–Asn45 is disordered. A coiled-coil region spans residues Met1 to Tyr274.

It belongs to the tropomyosin family. In terms of assembly, homodimer.

In terms of biological role, tropomyosin, in association with the troponin complex, plays a central role in the calcium dependent regulation of muscle contraction. The sequence is that of Tropomyosin from Metapenaeus ensis (Greasyback shrimp).